A 295-amino-acid polypeptide reads, in one-letter code: 4-hydroxy-tetrahydrodipicolinate synthase (295 aa).

T46 contributes to the pyruvate binding site. The active-site Proton donor/acceptor is Y135. K164 serves as the catalytic Schiff-base intermediate with substrate. I205 contacts pyruvate.

It belongs to the DapA family. Homotetramer; dimer of dimers.

Its subcellular location is the cytoplasm. It catalyses the reaction L-aspartate 4-semialdehyde + pyruvate = (2S,4S)-4-hydroxy-2,3,4,5-tetrahydrodipicolinate + H2O + H(+). Its pathway is amino-acid biosynthesis; L-lysine biosynthesis via DAP pathway; (S)-tetrahydrodipicolinate from L-aspartate: step 3/4. Its function is as follows. Catalyzes the condensation of (S)-aspartate-beta-semialdehyde [(S)-ASA] and pyruvate to 4-hydroxy-tetrahydrodipicolinate (HTPA). The chain is 4-hydroxy-tetrahydrodipicolinate synthase from Aliarcobacter butzleri (strain RM4018) (Arcobacter butzleri).